Consider the following 503-residue polypeptide: Sodium/hydrogen exchanger 3 (503 aa).

Topologically, residues 1–22 (MVIGLSTMLEKTEALFASDHAS) are cytoplasmic. Residues 23 to 43 (VVSMNLFVALLCACIVLGHLL) form a helical membrane-spanning segment. At 44–51 (EETRWMNE) the chain is on the vacuolar side. N50 carries an N-linked (GlcNAc...) asparagine glycan. Residues 52–72 (SITALIIGSCTGIVILLISGG) traverse the membrane as a helical segment. The Cytoplasmic segment spans residues 73-76 (KSSR). An intramembrane region (helical) is located at residues 77–97 (ILVFSEDLFFIYLLPPIIFNA). At 98-109 (GFQVKKKQFFRN) the chain is on the cytoplasmic side. The chain crosses the membrane as a helical span at residues 110-130 (FMTIMLFGAIGTLISFVIISF). The Vacuolar portion of the chain corresponds to 131–138 (GAKHLFEK). The helical transmembrane segment at 139-159 (MNIGDLTIADYLAIGAIFSAT) threads the bilayer. Residues 160 to 174 (DSVCTLQVLNQDETP) lie on the Cytoplasmic side of the membrane. Residues 175–195 (LLYSLVFGEGVVNDATSVVLF) traverse the membrane as a helical segment. The Vacuolar segment spans residues 196–219 (NAIQRFDLTNINSAIALEFAGNFF). A helical transmembrane segment spans residues 220-240 (YLFILSTALGVAAGLLSAFVI). Topologically, residues 241–265 (KKLYIGRHSTDREVALMMLLAYLSY) are cytoplasmic. Residues 266-286 (MLAELFHLSSILTVFFCGIVM) form a helical membrane-spanning segment. Residues 287-305 (SHYTWHNVTDKSKVTTKHT) are Vacuolar-facing. N293 is a glycosylation site (N-linked (GlcNAc...) asparagine). The helical transmembrane segment at 306-326 (FAAMSFLAEIFIFLYVGMDAL) threads the bilayer. Residues 327–345 (DIEKWDVVRNSPGQSIGVS) are Cytoplasmic-facing. Residues 346–366 (SILLGLILLGRAAFVFPLSFL) form a helical membrane-spanning segment. Topologically, residues 367-383 (SNLTKSSPDEKIDLKKQ) are vacuolar. A glycan (N-linked (GlcNAc...) asparagine) is linked at N368. The chain crosses the membrane as a helical span at residues 384–406 (VTIWWAGLMRGAVSMALAYNQFT). Residues 407–416 (TSGHTKVLGN) are Cytoplasmic-facing. A helical transmembrane segment spans residues 417-437 (AIMITSTITVVLFSTVVFGLL). Topologically, residues 438 to 503 (TKPLVKHLQP…FWKSPSRFTH (66 aa)) are vacuolar.

Belongs to the monovalent cation:proton antiporter 1 (CPA1) transporter (TC 2.A.36) family. In terms of tissue distribution, expressed in roots.

It is found in the vacuole membrane. The catalysed reaction is Na(+)(in) + H(+)(out) = Na(+)(out) + H(+)(in). It carries out the reaction K(+)(in) + H(+)(out) = K(+)(out) + H(+)(in). May act in low affinity electroneutral exchange of protons for cations such as Na(+) or K(+) across membranes. May also exchange Li(+) and Cs(+) with a lower affinity. This is Sodium/hydrogen exchanger 3 (NHX3) from Arabidopsis thaliana (Mouse-ear cress).